Reading from the N-terminus, the 367-residue chain is Heme A synthase (367 aa).

5 consecutive transmembrane segments (helical) span residues 25 to 45 (ALRL…LVGG), 111 to 131 (LIAR…WLTG), 139 to 159 (WPLV…WWMV), 174 to 194 (LATH…IMRG), and 210 to 230 (GFAA…ALVA). Residue histidine 274 coordinates heme. The next 3 membrane-spanning stretches (helical) occupy residues 276–296 (IGAY…LRAA), 305–325 (AVVL…TLLM), and 327–347 (VPLH…GFAV). Residue histidine 335 participates in heme binding.

This sequence belongs to the COX15/CtaA family. Type 2 subfamily. Interacts with CtaB. Heme b is required as a cofactor.

Its subcellular location is the cell membrane. It catalyses the reaction Fe(II)-heme o + 2 A + H2O = Fe(II)-heme a + 2 AH2. The protein operates within porphyrin-containing compound metabolism; heme A biosynthesis; heme A from heme O: step 1/1. Catalyzes the conversion of heme O to heme A by two successive hydroxylations of the methyl group at C8. The first hydroxylation forms heme I, the second hydroxylation results in an unstable dihydroxymethyl group, which spontaneously dehydrates, resulting in the formyl group of heme A. The chain is Heme A synthase from Rhizobium etli (strain CIAT 652).